The following is a 452-amino-acid chain: Phosphoglucosamine mutase (452 aa).

Ser-103 functions as the Phosphoserine intermediate in the catalytic mechanism. Residues Ser-103, Asp-244, Asp-246, and Asp-248 each contribute to the Mg(2+) site. At Ser-103 the chain carries Phosphoserine.

This sequence belongs to the phosphohexose mutase family. Mg(2+) is required as a cofactor. In terms of processing, activated by phosphorylation.

It catalyses the reaction alpha-D-glucosamine 1-phosphate = D-glucosamine 6-phosphate. Catalyzes the conversion of glucosamine-6-phosphate to glucosamine-1-phosphate. In Fusobacterium nucleatum subsp. nucleatum (strain ATCC 25586 / DSM 15643 / BCRC 10681 / CIP 101130 / JCM 8532 / KCTC 2640 / LMG 13131 / VPI 4355), this protein is Phosphoglucosamine mutase.